We begin with the raw amino-acid sequence, 148 residues long: Angiogenin-1 (148 aa).

A signal peptide spans 1–23; the sequence is MVMVLSPLLLVFILGLGLTPVAP. Catalysis depends on His-37, which acts as the Proton acceptor. Arg-45 contacts tRNA. Disulfide bonds link Cys-50–Cys-105, Cys-63–Cys-116, and Cys-81–Cys-131. The Nucleolar localization signal signature appears at 55-59; it reads KNRRL. TRNA is bound by residues Cys-105 and Ile-127. His-138 functions as the Proton donor in the catalytic mechanism.

This sequence belongs to the pancreatic ribonuclease family. In terms of assembly, homodimer. Interacts with RNH1; inhibiting ANG ribonuclease activity. In terms of tissue distribution, serum and milk.

It localises to the secreted. The protein localises to the nucleus. The protein resides in the nucleolus. It is found in the cytoplasm. Its subcellular location is the stress granule. Functionally, secreted ribonuclease that can either promote or restrict cell proliferation of target cells, depending on the context. Endocytosed in target cells via its receptor PLXNB2 and translocates to the cytoplasm or nucleus. Under stress conditions, localizes to the cytoplasm and promotes the assembly of stress granules (SGs): specifically cleaves a subset of tRNAs within anticodon loops to produce tRNA-derived stress-induced fragments (tiRNAs), resulting in translation repression and inhibition of cell proliferation. tiRNas also prevent formation of apoptosome, thereby promoting cell survival. Preferentially cleaves RNAs between a pyrimidine and an adenosine residue, suggesting that it cleaves the anticodon loop of tRNA(Ala) (32-UUAGCAU-38) after positions 33 and 36. Cleaves a subset of tRNAs, including tRNA(Ala), tRNA(Glu), tRNA(Gly), tRNA(Lys), tRNA(Val), tRNA(His), tRNA(Asp) and tRNA(Sec). Under growth conditions and in differentiated cells, translocates to the nucleus and stimulates ribosomal RNA (rRNA) transcription, including that containing the initiation site sequences of 45S rRNA, thereby promoting cell growth and proliferation. Angiogenin induces vascularization of normal and malignant tissues via its ability to promote rRNA transcription. This chain is Angiogenin-1 (ANG1), found in Bos taurus (Bovine).